The following is a 116-amino-acid chain: Proline-rich protein 9 (116 aa).

The chain is Proline-rich protein 9 (PRR9) from Bos taurus (Bovine).